A 4351-amino-acid polypeptide reads, in one-letter code: Protocadherin Fat 2 (4351 aa).

A signal peptide spans 1–18 (MTLVLLGVAMVLLHRAAC). Topologically, residues 19–4050 (EKPLEETITP…IKRGDWGQQE (4032 aa)) are extracellular. 2 consecutive Cadherin domains span residues 34 to 148 (THSL…KPLF) and 149 to 256 (SPPS…PPVI). Residues Asn39, Asn210, Asn280, and Asn330 are each glycosylated (N-linked (GlcNAc...) asparagine). Cadherin domains follow at residues 363-458 (EKAV…APVF), 459-564 (NRSS…QPMF), 565-669 (EEVN…VPVQ), 716-820 (DHFP…PPRF), 821-925 (PPGG…PPQC), 926-1032 (ITEH…SPHF), 1033-1142 (SSFV…RPVF), 1138-1242 (SRPV…SPMF), 1243-1346 (SHKL…SSIP), 1350-1448 (DESH…RPQF), 1449-1555 (LQDH…SPHF), 1556-1660 (TQPR…APIF), 1661-1758 (SKDE…APAF), 1759-1872 (LKST…PPRF), 1873-1968 (SEQI…SLQF), 1969-2070 (DQDI…IPEF), 2071-2171 (QHLP…NPLF), 2172-2272 (QSPY…PPTF), 2273-2379 (SQLV…PPEF), 2380-2481 (REPQ…SPEF), 2482-2585 (QQNV…APQF), 2586-2692 (KASG…LPKF), 2693-2799 (SEPL…RPVF), 2800-2908 (EADP…PPRF), 2909-3013 (ASED…SPQC), 3014-3115 (SQLL…APRF), 3116-3220 (FPSH…LPIF), 3221-3323 (LNSE…HPRF), 3324-3428 (THDL…PPRF), 3429-3533 (FQLN…PPST), and 3534-3631 (LPLE…APQQ). 4 N-linked (GlcNAc...) asparagine glycosylation sites follow: Asn459, Asn568, Asn627, and Asn789. A glycan (N-linked (GlcNAc...) asparagine) is linked at Asn996. Residues Asn1175, Asn1276, and Asn1417 are each glycosylated (N-linked (GlcNAc...) asparagine). N-linked (GlcNAc...) asparagine glycosylation is found at Asn1899, Asn1998, Asn2007, Asn2102, Asn2165, Asn2183, Asn2325, Asn2368, Asn2387, Asn2430, Asn2470, Asn2547, and Asn2597. N-linked (GlcNAc...) asparagine glycans are attached at residues Asn3127, Asn3278, and Asn3312. Residues Asn3432, Asn3603, Asn3770, Asn3774, Asn3815, Asn3842, Asn3875, and Asn3906 are each glycosylated (N-linked (GlcNAc...) asparagine). In terms of domain architecture, Laminin G-like spans 3775-3946 (GTTWRFSGQS…YLETWALSQC (172 aa)). 4 disulfide bridges follow: Cys3914–Cys3946, Cys3953–Cys3964, Cys3958–Cys3974, and Cys3976–Cys3985. EGF-like domains follow at residues 3949 to 3986 (PGTT…RNCE) and 3988 to 4024 (GREN…DRCE). A glycan (N-linked (GlcNAc...) asparagine) is linked at Asn3991. Intrachain disulfides connect Cys3992-Cys4003, Cys3997-Cys4012, and Cys4014-Cys4023. Residues 4051 to 4071 (FLVIIVALPLLIIATVGLLLY) form a helical membrane-spanning segment. The Cytoplasmic segment spans residues 4072–4351 (CRRCKSHKPV…DYGSCEEVMF (280 aa)). Positions 4313-4340 (DCEVNGGPAPGRSQPRAPPNYEGSDMVE) are disordered.

In terms of assembly, homodimer.

The protein resides in the cell membrane. It is found in the cell junction. The protein localises to the golgi apparatus. Its subcellular location is the trans-Golgi network. Functionally, involved in the regulation of cell migration. May be involved in mediating the organization of the parallel fibers of granule cells during cerebellar development. This chain is Protocadherin Fat 2 (Fat2), found in Mus musculus (Mouse).